The following is a 260-amino-acid chain: Indole-3-glycerol phosphate synthase (260 aa).

This sequence belongs to the TrpC family.

It carries out the reaction 1-(2-carboxyphenylamino)-1-deoxy-D-ribulose 5-phosphate + H(+) = (1S,2R)-1-C-(indol-3-yl)glycerol 3-phosphate + CO2 + H2O. It participates in amino-acid biosynthesis; L-tryptophan biosynthesis; L-tryptophan from chorismate: step 4/5. The protein is Indole-3-glycerol phosphate synthase of Staphylococcus aureus (strain Mu3 / ATCC 700698).